The primary structure comprises 417 residues: NADH-quinone oxidoreductase subunit D (417 aa).

Belongs to the complex I 49 kDa subunit family. In terms of assembly, NDH-1 is composed of 14 different subunits. Subunits NuoB, C, D, E, F, and G constitute the peripheral sector of the complex.

The protein localises to the cell inner membrane. It catalyses the reaction a quinone + NADH + 5 H(+)(in) = a quinol + NAD(+) + 4 H(+)(out). Functionally, NDH-1 shuttles electrons from NADH, via FMN and iron-sulfur (Fe-S) centers, to quinones in the respiratory chain. The immediate electron acceptor for the enzyme in this species is believed to be ubiquinone. Couples the redox reaction to proton translocation (for every two electrons transferred, four hydrogen ions are translocated across the cytoplasmic membrane), and thus conserves the redox energy in a proton gradient. The protein is NADH-quinone oxidoreductase subunit D of Methylibium petroleiphilum (strain ATCC BAA-1232 / LMG 22953 / PM1).